A 404-amino-acid chain; its full sequence is Protein translocase subunit SecD (404 aa).

6 consecutive transmembrane segments (helical) span residues 7 to 27 (HYIW…FNKV), 239 to 259 (LIAL…PGIV), 262 to 282 (IALL…GAAL), 283 to 303 (TLPG…SNVI), 330 to 350 (FPAI…LFFL), and 357 to 377 (GFAV…VFVS).

Belongs to the SecD/SecF family. SecD subfamily. Forms a complex with SecF. Part of the essential Sec protein translocation apparatus which comprises SecA, SecYEG and auxiliary proteins SecDF. Other proteins may also be involved.

It localises to the cell inner membrane. In terms of biological role, part of the Sec protein translocase complex. Interacts with the SecYEG preprotein conducting channel. SecDF uses the proton motive force (PMF) to complete protein translocation after the ATP-dependent function of SecA. This Leptotrichia buccalis (strain ATCC 14201 / DSM 1135 / JCM 12969 / NCTC 10249 / C-1013-b) protein is Protein translocase subunit SecD.